A 404-amino-acid polypeptide reads, in one-letter code: MLRWTTAGESHGRALVAMVEGMVAGVHVTTQDISAQLARRRLGYGRGARMKFEQDQVTMLTGLRHGVTLGGPIAIEIGNTEWPKWETVMAPDPVDPAVLADSAARNAPLTRPRPGHADYAGMLKYGFDDARPVLERASARETAARVAAGTVARAFLQQALGVEIVSHVISIGASKPYDGPPPQAADLTAIDASPVRAFDAASEALMIDEIEAAKRDGDTLGGVVEVVAHGLPVGLGSFTSGDNRLDSQLAGAVMGIQAIKGVEIGDGFETARRRGSVAHDEIYPGADGVMRSTNRAGGLEGGMTNGLPVRVRAAMKPISTVPRALATVDMATGEEAVAIHQRSDVCAVPAAAVVVETMVALVLARAVLEKFGGDSLAETRANIDSYLRAVATREPSTDGARASG.

NADP(+) is bound by residues Arg-40 and Arg-46. FMN contacts are provided by residues 136 to 138, 257 to 258, Gly-301, 316 to 320, and Arg-342; these read RAS, QA, and KPIST.

Belongs to the chorismate synthase family. Homotetramer. The cofactor is FMNH2.

The enzyme catalyses 5-O-(1-carboxyvinyl)-3-phosphoshikimate = chorismate + phosphate. Its pathway is metabolic intermediate biosynthesis; chorismate biosynthesis; chorismate from D-erythrose 4-phosphate and phosphoenolpyruvate: step 7/7. In terms of biological role, catalyzes the anti-1,4-elimination of the C-3 phosphate and the C-6 proR hydrogen from 5-enolpyruvylshikimate-3-phosphate (EPSP) to yield chorismate, which is the branch point compound that serves as the starting substrate for the three terminal pathways of aromatic amino acid biosynthesis. This reaction introduces a second double bond into the aromatic ring system. The protein is Chorismate synthase of Mycolicibacterium vanbaalenii (strain DSM 7251 / JCM 13017 / BCRC 16820 / KCTC 9966 / NRRL B-24157 / PYR-1) (Mycobacterium vanbaalenii).